We begin with the raw amino-acid sequence, 355 residues long: D-alanine--D-alanine ligase (355 aa).

The region spanning 143 to 350 (KQIFSNLSIP…IDQLVAKLID (208 aa)) is the ATP-grasp domain. Residue 178-233 (IEKLNLPVFVKPANSGSSLGISKAKNKSEIIKALQKAWEIDSRIVIEEGLNVRELE) participates in ATP binding. Mg(2+)-binding residues include aspartate 303, glutamate 317, and asparagine 319.

Belongs to the D-alanine--D-alanine ligase family. It depends on Mg(2+) as a cofactor. Mn(2+) is required as a cofactor.

The protein resides in the cytoplasm. The catalysed reaction is 2 D-alanine + ATP = D-alanyl-D-alanine + ADP + phosphate + H(+). The protein operates within cell wall biogenesis; peptidoglycan biosynthesis. Cell wall formation. This is D-alanine--D-alanine ligase from Prochlorococcus marinus (strain MIT 9515).